A 252-amino-acid chain; its full sequence is Phosphate import ATP-binding protein PstB (252 aa).

An ABC transporter domain is found at 6-247 (MSIRDLNFYY…PAQKATEDYI (242 aa)). ATP is bound at residue 38–45 (GPSGCGKS).

Belongs to the ABC transporter superfamily. Phosphate importer (TC 3.A.1.7) family. The complex is composed of two ATP-binding proteins (PstB), two transmembrane proteins (PstC and PstA) and a solute-binding protein (PstS).

Its subcellular location is the cell inner membrane. The enzyme catalyses phosphate(out) + ATP + H2O = ADP + 2 phosphate(in) + H(+). Functionally, part of the ABC transporter complex PstSACB involved in phosphate import. Responsible for energy coupling to the transport system. This Psychrobacter cryohalolentis (strain ATCC BAA-1226 / DSM 17306 / VKM B-2378 / K5) protein is Phosphate import ATP-binding protein PstB.